The following is a 235-amino-acid chain: Carboxy-S-adenosyl-L-methionine synthase (235 aa).

S-adenosyl-L-methionine contacts are provided by residues Tyr-35, 60 to 62 (GCS), 83 to 84 (DN), Asn-124, and Arg-191.

The protein belongs to the class I-like SAM-binding methyltransferase superfamily. Cx-SAM synthase family. Homodimer.

The enzyme catalyses prephenate + S-adenosyl-L-methionine = carboxy-S-adenosyl-L-methionine + 3-phenylpyruvate + H2O. Functionally, catalyzes the conversion of S-adenosyl-L-methionine (SAM) to carboxy-S-adenosyl-L-methionine (Cx-SAM). The polypeptide is Carboxy-S-adenosyl-L-methionine synthase (Campylobacter jejuni subsp. doylei (strain ATCC BAA-1458 / RM4099 / 269.97)).